The sequence spans 338 residues: Ketoreductase azaE (338 aa).

The NADP(+) site is built by Lys41 and Tyr166.

This sequence belongs to the NAD(P)-dependent epimerase/dehydratase family. Dihydroflavonol-4-reductase subfamily.

It functions in the pathway secondary metabolite biosynthesis. Ketoreductase; part of the gene cluster that mediates the biosynthesis of azaphilones, a class of fungal metabolites characterized by a highly oxygenated pyrano-quinone bicyclic core and exhibiting a broad range of bioactivities. In the first step, the non-reducing polyketide synthase azaA forms the hexaketide precursor from successive condensations of five malonyl-CoA units, presumably with a simple acetyl-CoA starter unit. The reactive polyketide chain then undergoes a PT-mediated C2-C7 cyclization to afford the aromatic ring and is eventually released as an aldehyde through the R-domain. The putative ketoreductase azaE is proposed to catalyze the reduction of the terminal ketone resulting in the early culture product FK17-P2a. The monooxygenase azaH was demonstrated to be the only enzyme required to convert FK17-P2a to azanigerone E. AzaH first hydroxylates the benzaldehyde intermediate FK17-P2a at C4, which triggers the formation of the pyran-ring to afford azanigerone E. In parallel, the 2,4-dimethylhexanoyl chain is synthesized by the HR-PKS azaB and is proposed to be transferred to the C4-hydroxyl of azanigerone E by the acyltransferase azaD directly from the ACP domain of azaB. Alternatively, the 2,4-dimethyl-hexanoyl chain may be offloaded from the HR-PKS as a carboxylic acid and converted to an acyl-CoA by azaF. The resulting acyl-CoA molecule could then be taken up as a substrate by AzaD to form azanigerone B. To yield the carboxylic acid substituent in azanigerone A, the hydroxypropyl side chain of azanigerone B would need to undergo a C-C oxidative cleavage catalyzed by cytochrome P450 AzaI. AzaI is proposed to act on a vicinal diol that leads to a C-C bond scission either through an alkoxyradical intermediate or a peroxy complex. In the biosynthesis of azanigerone A, azanigerone B first undergoes hydroxylation at C10, possibly catalyzed by one of the two FAD-dependent monooxygenases encoded in the cluster, azaG or azaL, resulting in the vicinal diol azanigerone C. Oxidative cleavage of azanigerone C by azaI would yield the corresponding aldehyde derivative of azanigerone A. Finally, the dehydrogenase azaJ is proposed to convert the aldehyde functional group into the carboxylic acid, completing the conversion from azanigerone B to azanigerone A. Alternatively, the oxidation of aldehyde to carboxylic acid may be catalyzed by the same P450 enzyme azaI via consecutive oxidation or by endogenous alcohol dehydrogenase. The sequence is that of Ketoreductase azaE from Aspergillus niger (strain ATCC 1015 / CBS 113.46 / FGSC A1144 / LSHB Ac4 / NCTC 3858a / NRRL 328 / USDA 3528.7).